We begin with the raw amino-acid sequence, 589 residues long: MPTIGVKRDLLFEALGKTYTDDEFQDLCFAFGLELDEVTTEKQMLTKEQGDVAAAANASEEIIYRIDIPANRYDLLCLEGLVTGLLVFQGKLKPPKFQFVELAKRQVLKIDPSTAQIRPYAVAAVLRNVTFTQASYNSFIDLQDKLHQNICRKRTLVAIGTHDLDTLQGPFSYEALAPDQIKFKPLNQTKEMTGSELMDFYSTHAQLKQYLPIIRESPVYPVIYDANRVVLSLPPIINGDHSKITLKTKNVFIECTATDRTKAKVVLDTIVCLFSEHCAQKFTVEPCDVVQPDGSVISYPELEVREERISVKRANAYIGIDEPAEKLADMLTRMYLEAKVDGDSLVVKIPPTRHDVIHACDIYEDVAIAYGYNNIKKSLPAFMQIAKQFPLNKLTEQLREQVAQAGFTEALTFTLCSRDDIGRKLNKNIDALPAVHIGNPKTLEFQVVRTTLLPGLLKTLVANRKMPLPLKLFEISDVVVADESTEVGARNERRVCAVNCNKTAGFEVVHGLLDRVMQLLSVPWKSASGTKGYYLQATEDPSYFPGRCANVMYDGVVIGKIGVLHPTVLQAFELTTPCSAVEFTIEPFV.

Residues 302–377 (LEVREERISV…IAYGYNNIKK (76 aa)) form the B5 domain. Positions 355, 361, 364, and 365 each coordinate Mg(2+).

This sequence belongs to the phenylalanyl-tRNA synthetase beta subunit family. Type 2 subfamily. Tetramer of two alpha and two beta subunits. It depends on Mg(2+) as a cofactor.

It localises to the cytoplasm. The enzyme catalyses tRNA(Phe) + L-phenylalanine + ATP = L-phenylalanyl-tRNA(Phe) + AMP + diphosphate + H(+). The polypeptide is Phenylalanine--tRNA ligase beta subunit (Drosophila melanogaster (Fruit fly)).